A 71-amino-acid chain; its full sequence is ATP synthase subunit c (71 aa).

The next 2 helical transmembrane spans lie at 9–29 (MIGYGLAAIGSAIGVGLIFAA) and 49–69 (LLGFALAEALAILGLVFAFVI).

The protein belongs to the ATPase C chain family. As to quaternary structure, F-type ATPases have 2 components, F(1) - the catalytic core - and F(0) - the membrane proton channel. F(1) has five subunits: alpha(3), beta(3), gamma(1), delta(1), epsilon(1). F(0) has three main subunits: a(1), b(2) and c(10-14). The alpha and beta chains form an alternating ring which encloses part of the gamma chain. F(1) is attached to F(0) by a central stalk formed by the gamma and epsilon chains, while a peripheral stalk is formed by the delta and b chains.

Its subcellular location is the cell membrane. In terms of biological role, f(1)F(0) ATP synthase produces ATP from ADP in the presence of a proton or sodium gradient. F-type ATPases consist of two structural domains, F(1) containing the extramembraneous catalytic core and F(0) containing the membrane proton channel, linked together by a central stalk and a peripheral stalk. During catalysis, ATP synthesis in the catalytic domain of F(1) is coupled via a rotary mechanism of the central stalk subunits to proton translocation. Its function is as follows. Key component of the F(0) channel; it plays a direct role in translocation across the membrane. A homomeric c-ring of between 10-14 subunits forms the central stalk rotor element with the F(1) delta and epsilon subunits. The polypeptide is ATP synthase subunit c (Micrococcus luteus (strain ATCC 4698 / DSM 20030 / JCM 1464 / CCM 169 / CCUG 5858 / IAM 1056 / NBRC 3333 / NCIMB 9278 / NCTC 2665 / VKM Ac-2230) (Micrococcus lysodeikticus)).